The chain runs to 1063 residues: Endo-1,4-beta-xylanase 2 (1063 aa).

4 CBM-cenC domains span residues 5-146 (NIVM…GPAP), 183-313 (NIIK…LEGP), 348-482 (NHIF…IEGP), and 517-662 (NIVS…QGPS). A GH10 domain is found at 711–1006 (SGATVKIRQT…NEAGKRFLEI (296 aa)). Glutamate 840 (proton donor) is an active-site residue. Glutamate 941 (nucleophile) is an active-site residue.

It belongs to the glycosyl hydrolase 10 (cellulase F) family.

The catalysed reaction is Endohydrolysis of (1-&gt;4)-beta-D-xylosidic linkages in xylans.. The protein operates within glycan degradation; xylan degradation. In terms of biological role, binds to and hydrolyzes insoluble and soluble xylan substrates. The protein is Endo-1,4-beta-xylanase 2 of Arabidopsis thaliana (Mouse-ear cress).